Here is a 298-residue protein sequence, read N- to C-terminus: Probable pyridoxal 5'-phosphate synthase subunit SNZ2 (298 aa).

Asp21 contacts D-ribose 5-phosphate. The Schiff-base intermediate with D-ribose 5-phosphate role is filled by Lys78. Residues Gly150, Gly213, and 234–235 contribute to the D-ribose 5-phosphate site; that span reads GS.

This sequence belongs to the PdxS/SNZ family. In terms of assembly, homohexamer. Interacts with THI11.

It carries out the reaction aldehydo-D-ribose 5-phosphate + D-glyceraldehyde 3-phosphate + L-glutamine = pyridoxal 5'-phosphate + L-glutamate + phosphate + 3 H2O + H(+). It functions in the pathway cofactor biosynthesis; pyridoxal 5'-phosphate biosynthesis. Functionally, catalyzes the formation of pyridoxal 5'-phosphate from ribose 5-phosphate (RBP), glyceraldehyde 3-phosphate (G3P) and ammonia. The ammonia is provided by a SNO isoform. Can also use ribulose 5-phosphate and dihydroxyacetone phosphate as substrates, resulting from enzyme-catalyzed isomerization of RBP and G3P, respectively. The protein is Probable pyridoxal 5'-phosphate synthase subunit SNZ2 (SNZ2) of Saccharomyces cerevisiae (strain ATCC 204508 / S288c) (Baker's yeast).